We begin with the raw amino-acid sequence, 317 residues long: MQIKLANPRGFCAGVDRAIEIVNRALDVFGPPIYVRHEVVHNRFVVDSLRERGAVFVEELHEVPDDVIVIFSAHGVSRAVQQEAERRGLRIFDATCPLVTKVHMEVLRYAKRGQECVLIGHAGHPEVEGTMGRYDTSFGGQIYLVEDEADVENLEVNGPERLAFVTQTTLSMDDTSRVIDALRAKFPQIDGPRKDDICYATQNRQDAVRGLASESDLVLVVGSPNSSNSNRLRELAERTGTPAYLIDTAEQIRPEWLTDVSAIGITAGASAPEVLVQAVIERLQSLGAEAPDELAGQAENITFSMPQELRERVIASE.

[4Fe-4S] cluster is bound at residue cysteine 12. Histidine 41 and histidine 74 together coordinate (2E)-4-hydroxy-3-methylbut-2-enyl diphosphate. Histidine 41 and histidine 74 together coordinate dimethylallyl diphosphate. Positions 41 and 74 each coordinate isopentenyl diphosphate. A [4Fe-4S] cluster-binding site is contributed by cysteine 96. Histidine 124 serves as a coordination point for (2E)-4-hydroxy-3-methylbut-2-enyl diphosphate. Histidine 124 provides a ligand contact to dimethylallyl diphosphate. Histidine 124 contacts isopentenyl diphosphate. Residue glutamate 126 is the Proton donor of the active site. Position 168 (threonine 168) interacts with (2E)-4-hydroxy-3-methylbut-2-enyl diphosphate. Residue cysteine 198 participates in [4Fe-4S] cluster binding. Residues serine 226, serine 227, asparagine 228, and serine 270 each coordinate (2E)-4-hydroxy-3-methylbut-2-enyl diphosphate. Dimethylallyl diphosphate contacts are provided by serine 226, serine 227, asparagine 228, and serine 270. The isopentenyl diphosphate site is built by serine 226, serine 227, asparagine 228, and serine 270.

Belongs to the IspH family. [4Fe-4S] cluster is required as a cofactor.

The enzyme catalyses isopentenyl diphosphate + 2 oxidized [2Fe-2S]-[ferredoxin] + H2O = (2E)-4-hydroxy-3-methylbut-2-enyl diphosphate + 2 reduced [2Fe-2S]-[ferredoxin] + 2 H(+). The catalysed reaction is dimethylallyl diphosphate + 2 oxidized [2Fe-2S]-[ferredoxin] + H2O = (2E)-4-hydroxy-3-methylbut-2-enyl diphosphate + 2 reduced [2Fe-2S]-[ferredoxin] + 2 H(+). It participates in isoprenoid biosynthesis; dimethylallyl diphosphate biosynthesis; dimethylallyl diphosphate from (2E)-4-hydroxy-3-methylbutenyl diphosphate: step 1/1. The protein operates within isoprenoid biosynthesis; isopentenyl diphosphate biosynthesis via DXP pathway; isopentenyl diphosphate from 1-deoxy-D-xylulose 5-phosphate: step 6/6. Its function is as follows. Catalyzes the conversion of 1-hydroxy-2-methyl-2-(E)-butenyl 4-diphosphate (HMBPP) into a mixture of isopentenyl diphosphate (IPP) and dimethylallyl diphosphate (DMAPP). Acts in the terminal step of the DOXP/MEP pathway for isoprenoid precursor biosynthesis. In Chromohalobacter salexigens (strain ATCC BAA-138 / DSM 3043 / CIP 106854 / NCIMB 13768 / 1H11), this protein is 4-hydroxy-3-methylbut-2-enyl diphosphate reductase.